Here is a 21-residue protein sequence, read N- to C-terminus: uncharacterized protein (21 aa).

This is an uncharacterized protein from Escherichia coli (strain K12).